The following is a 290-amino-acid chain: Glycine--tRNA ligase alpha subunit (290 aa).

This sequence belongs to the class-II aminoacyl-tRNA synthetase family. In terms of assembly, tetramer of two alpha and two beta subunits.

It is found in the cytoplasm. The catalysed reaction is tRNA(Gly) + glycine + ATP = glycyl-tRNA(Gly) + AMP + diphosphate. The polypeptide is Glycine--tRNA ligase alpha subunit (Fusobacterium nucleatum subsp. nucleatum (strain ATCC 25586 / DSM 15643 / BCRC 10681 / CIP 101130 / JCM 8532 / KCTC 2640 / LMG 13131 / VPI 4355)).